A 476-amino-acid chain; its full sequence is Transcription factor HBP-1b(c1) (476 aa).

Disordered stretches follow at residues 1 to 29 (ESRR…FGAP), 133 to 159 (HNND…PDID), and 171 to 207 (QLAA…RKSR). Residues 10–25 (AAAAAAAGDPRGPMPG) show a composition bias toward low complexity. Residues 135–144 (NDNWGESSMA) show a composition bias toward polar residues. Residues 180–191 (SSDKSRDKLDHK) are compositionally biased toward basic and acidic residues. The bZIP domain occupies 189-252 (DHKSLRRLAQ…SSGDQSQSAS (64 aa)). A basic motif region spans residues 191 to 211 (KSLRRLAQNREAARKSRLRKK). Residues 201-242 (EAARKSRLRKKAYIQNLESSRLKLTQLEQELQRARQQGIFIS) are a coiled coil. A leucine-zipper region spans residues 217–231 (LESSRLKLTQLEQEL). Positions 256-473 (AVAFDMEYAR…RALSSLWLAR (218 aa)) constitute a DOG1 domain.

The protein belongs to the bZIP family. Binds DNA as a dimer.

The protein resides in the nucleus. In terms of biological role, transcriptional activator that binds specifically to the DNA sequence 5'-TGACG-3'. Recognizes ocs elements like the as-1 motif of the cauliflower mosaic virus 35S promoter. Binding to the as-1-like cis elements mediate auxin- and salicylic acid-inducible transcription. Binds to the hexamer motif 5'-ACGTCA-3' of histone gene promoters. The chain is Transcription factor HBP-1b(c1) from Triticum aestivum (Wheat).